The sequence spans 675 residues: Heat shock 70 kDa protein 12A (675 aa).

Positions 1-45 (MADKEAGGGDAGPRETAPTSTYSSPARSLGDTGITPLSPSHILND) are disordered. N-acetylalanine is present on Ala2. The span at 17–26 (APTSTYSSPA) shows a compositional bias: polar residues.

Belongs to the heat shock protein 70 family. Interacts with SORL1 (via cytosolic C-terminus); this interaction affects SORL1 internalization and subcellular localization. As to expression, expressed most strongly in brain, kidney and heart with little or no expression in other tissues. In the brain, expressed in glial cells, including astrocytes (at protein level). In the aorta, preferentially expressed in lesions.

It is found in the cytoplasm. The protein localises to the nucleus. Adapter protein for SORL1, but not SORT1. Delays SORL1 internalization and affects SORL1 subcellular localization. The chain is Heat shock 70 kDa protein 12A (Hspa12a) from Mus musculus (Mouse).